A 79-amino-acid polypeptide reads, in one-letter code: UPF0181 protein PC1_1931 (79 aa).

Residues 54 to 79 (FDEDDDTVNDSDEEHYFDDGEEEDEQ) are disordered.

It belongs to the UPF0181 family.

The protein is UPF0181 protein PC1_1931 of Pectobacterium carotovorum subsp. carotovorum (strain PC1).